Here is a 47-residue protein sequence, read N- to C-terminus: Thionin (47 aa).

4 cysteine pairs are disulfide-bonded: C3/C41, C4/C33, C12/C31, and C16/C27.

Belongs to the plant thionin (TC 1.C.44) family. 4 C-C subfamily.

The protein resides in the secreted. Its function is as follows. Thionins are small plant proteins which are toxic to animal cells. They seem to exert their toxic effect at the level of the cell membrane. Their precise function is not known. The protein is Thionin (THI1) of Pyrularia pubera (Buffalo nut).